The following is a 156-amino-acid chain: ATP synthase subunit b (156 aa).

The chain crosses the membrane as a helical span at residues 7-26; sequence LIGQAIWFALFIWITMKYVW.

It belongs to the ATPase B chain family. In terms of assembly, F-type ATPases have 2 components, F(1) - the catalytic core - and F(0) - the membrane proton channel. F(1) has five subunits: alpha(3), beta(3), gamma(1), delta(1), epsilon(1). F(0) has three main subunits: a(1), b(2) and c(10-14). The alpha and beta chains form an alternating ring which encloses part of the gamma chain. F(1) is attached to F(0) by a central stalk formed by the gamma and epsilon chains, while a peripheral stalk is formed by the delta and b chains.

The protein localises to the cell inner membrane. In terms of biological role, f(1)F(0) ATP synthase produces ATP from ADP in the presence of a proton or sodium gradient. F-type ATPases consist of two structural domains, F(1) containing the extramembraneous catalytic core and F(0) containing the membrane proton channel, linked together by a central stalk and a peripheral stalk. During catalysis, ATP synthesis in the catalytic domain of F(1) is coupled via a rotary mechanism of the central stalk subunits to proton translocation. Functionally, component of the F(0) channel, it forms part of the peripheral stalk, linking F(1) to F(0). The sequence is that of ATP synthase subunit b from Dechloromonas aromatica (strain RCB).